Consider the following 292-residue polypeptide: uncharacterized protein (292 aa).

A helical transmembrane segment spans residues 17–37 (SMDMFFFLFIFLLFIYPEMMM).

The protein to M.jannaschii MJ0137.

It is found in the membrane. This is an uncharacterized protein from Methanocaldococcus jannaschii (strain ATCC 43067 / DSM 2661 / JAL-1 / JCM 10045 / NBRC 100440) (Methanococcus jannaschii).